A 431-amino-acid polypeptide reads, in one-letter code: IMP-specific 5'-nucleotidase 1 (431 aa).

ATP is bound at residue lysine 117. The Nucleophile role is filled by aspartate 157. 6 residues coordinate IMP: aspartate 157, aspartate 159, aspartate 165, threonine 193, aspartate 349, and lysine 357. 2 residues coordinate Mg(2+): aspartate 157 and aspartate 159. Aspartate 159 functions as the Proton donor in the catalytic mechanism. Residue aspartate 388 participates in Mg(2+) binding.

Belongs to the ISN1 family. As to quaternary structure, homotetramer. The cofactor is Mg(2+).

The catalysed reaction is IMP + H2O = inosine + phosphate. Allosterically activated by ATP. ATP binding is a prerequisite to magnesium and substrate binding. ATP binds to 2 of the subunits in the homotetramer inducing a closure of these 2 subunits and the release of the C-terminal loop, thereby activating the enzyme. In terms of biological role, IMP-specific 5'-nucleotidase involved in IMP (inositol monophosphate) degradation. This chain is IMP-specific 5'-nucleotidase 1 (isn-1), found in Neurospora crassa (strain ATCC 24698 / 74-OR23-1A / CBS 708.71 / DSM 1257 / FGSC 987).